The chain runs to 416 residues: Neurotensin receptor type 2 (416 aa).

At 1–32 the chain is on the extracellular side; the sequence is METSSLWPPRPSPSAGLSLEARLGVDTRLWAK. A helical membrane pass occupies residues 33-55; the sequence is VLFTALYSLIFALGTAGNALSVH. Residues 56 to 64 are Cytoplasmic-facing; it reads VVLKARAGR. Residues 65–87 form a helical membrane-spanning segment; sequence PGRLRYHVLSLALSALLLLLISV. The Extracellular portion of the chain corresponds to 88-109; it reads PMELYNFVWSHYPWVFGDLGCR. Residues Cys108 and Cys194 are joined by a disulfide bond. The chain crosses the membrane as a helical span at residues 110–131; the sequence is GYYFVRELCAYATVLSVASLSA. Over 132-154 the chain is Cytoplasmic; the sequence is ERCLAVCQPLRARRLLTPRRTRR. The chain crosses the membrane as a helical span at residues 155-176; the sequence is LLSLVWVASLGLALPMAVIMGQ. The Extracellular segment spans residues 177–217; the sequence is KHEMERADGEPEPASRVCTVLVSRATLQVFIQVNVLVSFVL. A helical membrane pass occupies residues 218-237; sequence PLALTAFLNGITVNHLVALY. Residues 238 to 297 are Cytoplasmic-facing; that stretch reads SQVPSASAQVNSIPSRLELLSEEGLLGFITWRKTLSLGVQASLVRHKDASQIRSLQHSAQ. A helical membrane pass occupies residues 298 to 318; the sequence is VLRAIVAVYVICWLPYHARRL. Over 319 to 337 the chain is Extracellular; that stretch reads MYCYIPDDGWTDELYDFYH. A helical transmembrane segment spans residues 338–358; it reads YFYMVTNTLFYVSSAVTPVLY. Over 359–416 the chain is Cytoplasmic; sequence NAVSSSFRKLFLESLSSLCGEQRSVVPLPQEAPESTTSTYSFRLWGSPRNPSLGEIQV. Cys377 carries S-palmitoyl cysteine lipidation. Ser410 carries the post-translational modification Phosphoserine.

This sequence belongs to the G-protein coupled receptor 1 family. Neurotensin receptor subfamily. NTSR2 sub-subfamily. Expressed maximally in the cerebellum, hippocampus, piriform cortex and neocortex of adult brain.

The protein localises to the cell membrane. In terms of biological role, receptor for the tridecapeptide neurotensin. It is associated with G proteins that activate a phosphatidylinositol-calcium second messenger system. This is Neurotensin receptor type 2 (Ntsr2) from Mus musculus (Mouse).